The primary structure comprises 354 residues: UDP-N-acetylglucosamine--N-acetylmuramyl-(pentapeptide) pyrophosphoryl-undecaprenol N-acetylglucosamine transferase (354 aa).

2 residues coordinate UDP-N-acetyl-alpha-D-glucosamine: serine 196 and glutamine 288.

It belongs to the glycosyltransferase 28 family. MurG subfamily.

The protein localises to the cell membrane. The enzyme catalyses Mur2Ac(oyl-L-Ala-gamma-D-Glu-L-Lys-D-Ala-D-Ala)-di-trans,octa-cis-undecaprenyl diphosphate + UDP-N-acetyl-alpha-D-glucosamine = beta-D-GlcNAc-(1-&gt;4)-Mur2Ac(oyl-L-Ala-gamma-D-Glu-L-Lys-D-Ala-D-Ala)-di-trans,octa-cis-undecaprenyl diphosphate + UDP + H(+). It participates in cell wall biogenesis; peptidoglycan biosynthesis. Functionally, cell wall formation. Catalyzes the transfer of a GlcNAc subunit on undecaprenyl-pyrophosphoryl-MurNAc-pentapeptide (lipid intermediate I) to form undecaprenyl-pyrophosphoryl-MurNAc-(pentapeptide)GlcNAc (lipid intermediate II). The chain is UDP-N-acetylglucosamine--N-acetylmuramyl-(pentapeptide) pyrophosphoryl-undecaprenol N-acetylglucosamine transferase from Streptococcus suis (strain 98HAH33).